A 352-amino-acid polypeptide reads, in one-letter code: Probable tyrosine-protein kinase DDB_G0290471 (352 aa).

The Protein kinase domain maps to isoleucine 51–tyrosine 333. ATP-binding positions include leucine 57 to valine 65 and lysine 78. Catalysis depends on aspartate 175, which acts as the Proton acceptor.

It belongs to the protein kinase superfamily. TKL Tyr protein kinase family.

It catalyses the reaction L-tyrosyl-[protein] + ATP = O-phospho-L-tyrosyl-[protein] + ADP + H(+). The chain is Probable tyrosine-protein kinase DDB_G0290471 from Dictyostelium discoideum (Social amoeba).